The chain runs to 561 residues: Developmental and secondary metabolism regulator veA (561 aa).

Disordered regions lie at residues 1-23 (MANR…RITR), 41-60 (ARAC…VDPP), and 258-361 (AYAR…PQGI). A compositionally biased stretch (basic and acidic residues) spans 12-23 (NETEHSVSRITR). The 209-residue stretch at 25–233 (GKQLTYKLSV…AEQGCRVRIR (209 aa)) folds into the Velvet domain. A Nuclear localization signal motif is present at residues 39–44 (ERARAC). Residues 258-268 (AYARSSDRFTT) are compositionally biased toward basic and acidic residues. Residues 324–339 (SHSQTPSYQSHLSFGS) show a composition bias toward polar residues. Residues 347-357 (PHMPPTPPPVA) show a composition bias toward pro residues. The PEST stretch occupies residues 438 to 485 (RPQTPNLPAMPPPKPLSNDYANHVVPSVECTSPGGSGGGGYDNVRGKR). Residues 491–524 (GPTYGKRSHEDTFGLDDRSMQNGMRPDTEPYPAY) are disordered. Basic and acidic residues predominate over residues 497–509 (RSHEDTFGLDDRS).

This sequence belongs to the velvet family. VeA subfamily. Component of the heterotrimeric velvet complex composed of laeA, veA and velB; velA acting as a bridging protein between laeA and velB. Interacts with kapA. Interacts with vosA and velc.

It localises to the nucleus. Its subcellular location is the cytoplasm. In terms of biological role, component of the velvet transcription factor complex that controls sexual/asexual developmental ratio in response to light, promoting sexual development in the darkness while stimulating asexual sporulation under illumination. The velvet complex acts as a global regulator for secondary metabolite gene expression. Controls the expression of the penicillin gene cluster. Positively controls the expression of the class V chitinase chiB1. Positively controls the expression of the transcription factor atfA. Required for cell wall integrity and controls hyphal branching. In Penicillium rubens (strain ATCC 28089 / DSM 1075 / NRRL 1951 / Wisconsin 54-1255) (Penicillium chrysogenum), this protein is Developmental and secondary metabolism regulator veA.